The sequence spans 2391 residues: Filaggrin-2 (2391 aa).

The interval 1–81 (MTDLLRSVVT…TEFLLMIFKL (81 aa)) is S-100-like. EF-hand domains follow at residues 8 to 43 (VVTV…ELHP) and 49 to 84 (DDPD…LTMA). 5 residues coordinate Ca(2+): aspartate 62, aspartate 64, aspartate 66, arginine 68, and glutamate 73. Disordered stretches follow at residues 96 to 275 (ASGS…DSGR), 349 to 369 (SYSQ…CGGQ), and 406 to 2391 (NSSS…LSRH). Residues 98–107 (GSKKHRRGHR) are compositionally biased toward basic residues. Acidic residues predominate over residues 111 to 121 (EESETEEDEED). Positions 149–163 (GTVKCRHGSNSRRLG) are enriched in basic residues. Residues 166–176 (GNLSSSGNQEG) are compositionally biased toward polar residues. The segment covering 193–209 (GKDRHGSSSVELRERIN) has biased composition (basic and acidic residues). A Filaggrin 1 repeat occupies 245–289 (ETSGHESNSTQSRIREQKLGSSCSGSGDSGRRSHACGYSNSSGCG). Composition is skewed to polar residues over residues 420–442 (GSGS…SSGF) and 449–476 (SGQT…SGKT). The stretch at 421-466 (SGSSQSTSFEQHGTGLSQSSGFEQHVCGSGQTCGQHESTSSQSLGY) is one Filaggrin 2 repeat. Residues 480–507 (GQHGSGSGQSSGFGQCGSGSGQSSGFGQ) show a composition bias toward gly residues. Low complexity predominate over residues 508-562 (HGSVSGQSSGFGQHGSVSGQSSGFGQHESRSRQSSYGQHGSGSSQSSGYGQYGSR). Residues 568 to 604 (GQHGLGSGQSTGFGQYGSGSGQSSGFGQHGSGSGQSS) are compositionally biased toward gly residues. Residues 605–655 (GFGQHESRSGQSSYGQHSSGSSQSSGYGQHGSRQTSGFGQHGSGSSQSTGF) are compositionally biased toward low complexity. Residues 656–666 (GQYGSGSGQSS) show a composition bias toward gly residues. Residues 667 to 734 (GFGQHVSGSG…SSGQSSSFGQ (68 aa)) are compositionally biased toward low complexity. Residues 735-756 (HGSGSGQSSGFGQHGSGSGQSS) are compositionally biased toward gly residues. Residues 757–807 (GFGQHESRSGQSSYGQHSSGSSQSSGYGQHGSRQTSGFGQHGSGSSQSTGF) show a composition bias toward low complexity. Positions 808 to 831 (GQYGSGSGQSAGFGQHGSGSGQSS) are enriched in gly residues. Residues 832-884 (GFGQHESRSHQSSYGQHGSGSSQSSGYGQHGSSSGQTSGFGQHRSSSGQYSGF) show a composition bias toward low complexity. The segment covering 885–908 (GQHGSGSGQSSGFGQHGTGSGQYS) has biased composition (gly residues). Low complexity predominate over residues 918–956 (HQSSYGQHGSGSSQSSGYGQHGSSSGQTFGFGQHRSGSG). Over residues 957–972 (QSSGFGQHGSGSGQSS) the composition is skewed to gly residues. 2 stretches are compositionally biased toward low complexity: residues 973–982 (GFGQHESGSG) and 994–1027 (SSQS…GFGQ). The stretch at 1019–1051 (SGQTTGFGQHRSSSGQYSGFGQHGSGSDQSSGF) is one Filaggrin 3 repeat. Gly residues predominate over residues 1052–1062 (GQHGTGSGQSS). Residues 1063 to 1098 (GFGQYESRSRQSSYGQHGSGSSQSSGYGQHGSNSGQ) are compositionally biased toward low complexity. The Filaggrin 4 repeat unit spans residues 1097 to 1141 (GQTSGFGQHRPGSGQSSGFGQYGSGSGQSSGFGQHGSGTGKSSGF). The segment covering 1111–1137 (QSSGFGQYGSGSGQSSGFGQHGSGTGK) has biased composition (gly residues). The segment covering 1148 to 1174 (SGQSSYGQHGTGSSQSSGCGQHESGSG) has biased composition (low complexity). Polar residues predominate over residues 1175 to 1198 (PTTSFGQHVSGSDNFSSSGQHISD). The span at 1206–1220 (GQYGSGSGQSTGLGQ) shows a compositional bias: gly residues. A compositionally biased stretch (polar residues) spans 1226–1249 (VESGSTVHGRQETTHGQTINTTRH). A compositionally biased stretch (low complexity) spans 1250–1263 (SQSGQGQSTQTGSR). A Phosphoserine modification is found at serine 1276. Over residues 1329–1343 (HGQSTQTGSRTSGRQ) the composition is skewed to polar residues. Over residues 1346 to 1355 (SHSDATDSEV) the composition is skewed to basic and acidic residues. Polar residues predominate over residues 1366–1377 (QEQTHSQAGSQH). The segment covering 1378–1390 (GESESTVHERHET) has biased composition (basic and acidic residues). Residues 1406–1416 (HGQSTQRGSRT) are compositionally biased toward low complexity. Phosphoserine is present on residues serine 1427 and serine 1428. A compositionally biased stretch (polar residues) spans 1439–1459 (RPQSQEQTHGQAGSQHGESGS). The stretch at 1455–1510 (GESGSTVHGRHGTTHGQTGDTTRHAHYHHGKSTQRGSSTTGRRGSGHSESSDSEVH) is one Filaggrin 5 repeat. Residues 1487–1496 (TQRGSSTTGR) show a composition bias toward low complexity. Phosphoserine is present on residues serine 1504 and serine 1505. Low complexity predominate over residues 1510-1529 (HSGGSHTHSGHTHGQSGSQH). Polar residues predominate over residues 1544 to 1559 (HGQTGDTTRHSYSGHE). A compositionally biased stretch (low complexity) spans 1560 to 1572 (QTTQTGSRTTGRQ). Basic and acidic residues-rich tracts occupy residues 1575 to 1584 (SHSESTDSEV) and 1605 to 1618 (QHEE…ERHG). The residue at position 1579 (serine 1579) is a Phosphoserine. The Filaggrin 6 repeat unit spans residues 1607–1662 (EEPEFTVHERHGTTHGQIGDTTGHSHSGHGQSTQRGSRTTGRQRSSHSESSDSEVH). The span at 1627-1649 (TTGHSHSGHGQSTQRGSRTTGRQ) shows a compositional bias: low complexity. The segment covering 1652–1661 (SHSESSDSEV) has biased composition (basic and acidic residues). Phosphoserine is present on residues serine 1656 and serine 1657. Composition is skewed to low complexity over residues 1662 to 1686 (HSGV…QSES) and 1711 to 1720 (GLTTQTGSRT). Residues 1755 to 1768 (QHGESESIVHERHG) are compositionally biased toward basic and acidic residues. A Filaggrin 7 repeat occupies 1757–1812 (GESESIVHERHGTIHGQTGDTTRHAHSGHGQSTQTGSRTTGRRSSGHSEYSDSEGH). Over residues 1784–1795 (GHGQSTQTGSRT) the composition is skewed to low complexity. Phosphoserine occurs at positions 1800 and 1807. Basic and acidic residues predominate over residues 1834–1845 (GESESIVDERHG). A compositionally biased stretch (low complexity) spans 1849–1873 (GQTGDTSGHSQSGHGQSTQSGSSTT). A compositionally biased stretch (basic and acidic residues) spans 1879 to 1888 (GHSESSDSEV). Phosphoserine occurs at positions 1883, 1884, and 1959. Filaggrin repeat units lie at residues 1928–1964 (DTTE…SEGP) and 1984–2039 (PESG…SEGH). Low complexity-rich tracts occupy residues 1963–1982 (GPSG…AGSH) and 2013–2022 (GQSTQRGSRT). Serine 2034 is modified (phosphoserine). 3 stretches are compositionally biased toward low complexity: residues 2039–2059 (HSGV…SQHG), 2114–2125 (HSGVSHTHSGHT), and 2162–2176 (HGQS…TGRQ). A Filaggrin 10 repeat occupies 2134–2189 (GESGSAIHGRQGTIHGQTGDTTRHGQSGHGQSTQTGSRTTGRQRSSHSESSDSEVH). Over residues 2179–2190 (SHSESSDSEVHS) the composition is skewed to basic and acidic residues. 3 stretches are compositionally biased toward low complexity: residues 2201-2211 (HSQAGSRHGQS), 2219-2228 (QGTTHGQTGD), and 2238-2247 (GQSTQRGSRT). Residues 2273–2288 (GHIQGQAGSQQRQPGS) show a composition bias toward polar residues. Over residues 2320–2331 (SRSSRASHFQSH) the composition is skewed to low complexity. Polar residues predominate over residues 2367 to 2391 (SRKSISNSHLSWSTDSTANKQLSRH).

The protein belongs to the S100-fused protein family. In the N-terminal section; belongs to the S-100 family. Post-translationally, deiminated by PADI1, PADI2 or PADI3 in vitro. The deiminated form is degraded by calpain-1/CAPN1 more quickly and into shorter peptides than the intact protein. In terms of processing, may be processed by calpain-1/CAPN1 in the uppermost epidermal layers. Expressed in skin, thymus, stomach and placenta, but not detected in heart, brain, liver, lung, bone marrow, small intestine, spleen, prostate, colon, adrenal gland, kidney, pancreas, mammary gland, bladder, thyroid, salivary gland and trachea. Weakly expressed in esophagus, tonsils and testis (at protein level). In the skin, strongly expressed in the upper stratum granulosum and lower stratum corneum, but not detected in the upper stratum corneum (at protein level). In scalp hair follicles, mainly restricted within the granular and cornified cells surrounding the infundibular outer root sheath, with weak expression in central and proximal outer root sheath (at protein level). Tends to be down-regulated in sporiatic lesions compared to non-lesional skin inthe same patients.

The protein localises to the cytoplasm. It is found in the cytoplasmic granule. Essential for normal cell-cell adhesion in the cornified cell layers. Important for proper integrity and mechanical strength of the stratum corneum of the epidermis. This chain is Filaggrin-2 (FLG2), found in Homo sapiens (Human).